The following is a 179-amino-acid chain: Large ribosomal subunit protein uL5 (179 aa).

The protein belongs to the universal ribosomal protein uL5 family. In terms of assembly, part of the 50S ribosomal subunit; part of the 5S rRNA/L5/L18/L25 subcomplex. Contacts the 5S rRNA and the P site tRNA. Forms a bridge to the 30S subunit in the 70S ribosome.

Functionally, this is one of the proteins that bind and probably mediate the attachment of the 5S RNA into the large ribosomal subunit, where it forms part of the central protuberance. In the 70S ribosome it contacts protein S13 of the 30S subunit (bridge B1b), connecting the 2 subunits; this bridge is implicated in subunit movement. Contacts the P site tRNA; the 5S rRNA and some of its associated proteins might help stabilize positioning of ribosome-bound tRNAs. The chain is Large ribosomal subunit protein uL5 from Synechococcus elongatus (strain ATCC 33912 / PCC 7942 / FACHB-805) (Anacystis nidulans R2).